Reading from the N-terminus, the 377-residue chain is Alanine racemase (377 aa).

Lys37 functions as the Proton acceptor; specific for D-alanine in the catalytic mechanism. At Lys37 the chain carries N6-(pyridoxal phosphate)lysine. A substrate-binding site is contributed by Arg135. Catalysis depends on Tyr271, which acts as the Proton acceptor; specific for L-alanine. Residue Met319 coordinates substrate.

It belongs to the alanine racemase family. Pyridoxal 5'-phosphate serves as cofactor.

It carries out the reaction L-alanine = D-alanine. The protein operates within amino-acid biosynthesis; D-alanine biosynthesis; D-alanine from L-alanine: step 1/1. Its function is as follows. Catalyzes the interconversion of L-alanine and D-alanine. May also act on other amino acids. The protein is Alanine racemase (alr) of Helicobacter acinonychis (strain Sheeba).